Consider the following 213-residue polypeptide: Endonuclease III (213 aa).

The HhH domain occupies 101-120 (LEELLKLPGVGRKTANIVLW). [4Fe-4S] cluster contacts are provided by cysteine 180, cysteine 187, cysteine 190, and cysteine 196.

Belongs to the Nth/MutY family. The cofactor is [4Fe-4S] cluster.

The catalysed reaction is 2'-deoxyribonucleotide-(2'-deoxyribose 5'-phosphate)-2'-deoxyribonucleotide-DNA = a 3'-end 2'-deoxyribonucleotide-(2,3-dehydro-2,3-deoxyribose 5'-phosphate)-DNA + a 5'-end 5'-phospho-2'-deoxyribonucleoside-DNA + H(+). Functionally, DNA repair enzyme that has both DNA N-glycosylase activity and AP-lyase activity. The DNA N-glycosylase activity releases various damaged pyrimidines from DNA by cleaving the N-glycosidic bond, leaving an AP (apurinic/apyrimidinic) site. The AP-lyase activity cleaves the phosphodiester bond 3' to the AP site by a beta-elimination, leaving a 3'-terminal unsaturated sugar and a product with a terminal 5'-phosphate. The chain is Endonuclease III from Thermotoga maritima (strain ATCC 43589 / DSM 3109 / JCM 10099 / NBRC 100826 / MSB8).